We begin with the raw amino-acid sequence, 509 residues long: Maturase K (509 aa).

It belongs to the intron maturase 2 family. MatK subfamily.

The protein localises to the plastid. It is found in the chloroplast. Its function is as follows. Usually encoded in the trnK tRNA gene intron. Probably assists in splicing its own and other chloroplast group II introns. This is Maturase K from Atropa belladonna (Belladonna).